Consider the following 1685-residue polypeptide: Phosphatidylinositol 4-phosphate 3-kinase C2 domain-containing subunit alpha (1685 aa).

Disordered regions lie at residues 1–33 (MAQI…EALQ) and 41–60 (KLQK…LSSS). At Ala-2 the chain carries N-acetylalanine. The interval 2 to 142 (AQISSNSGFK…FRPTIQRGQW (141 aa)) is interaction with clathrin; sufficient to induce clathrin assembly. Residues 19 to 31 (EPTRAKDVDKEEA) show a composition bias toward basic and acidic residues. Positions 49–60 (TDNQRGFELSSS) are enriched in polar residues. Residues Ser-60, Ser-108, Ser-259, Ser-327, and Ser-338 each carry the phosphoserine modification. Residues 419 to 507 (NASVKVSIDI…DTEIRLQLLT (89 aa)) form the PI3K-RBD domain. Position 628 is a phosphoserine (Ser-628). One can recognise a C2 PI3K-type domain in the interval 680–839 (TTEQLQFTIF…ERIVLQVDFP (160 aa)). Positions 859–1035 (QHNLETLEND…EHVLGALLSV (177 aa)) constitute a PIK helical domain. In terms of domain architecture, PI3K/PI4K catalytic spans 1103–1381 (SIKSCSFFSS…LIESSLGSIA (279 aa)). The segment at 1109–1115 (FFSSNAV) is G-loop. Residues 1245 to 1253 (GICDRHNDN) form a catalytic loop region. An activation loop region spans residues 1264–1290 (HIDFGKFLGHAQMFGTFKRDRAPFVLT). Residues 1420 to 1536 (GRIKEVSVFT…TFFHPLLRDE (117 aa)) form the PX domain. The interval 1486 to 1491 (RMVLGR) is interaction with PtdIns(4,5)P2-containing membranes. Residue Ser-1551 is modified to Phosphoserine. The C2 domain occupies 1554–1677 (TPGQIGGAVK…NLSKETVKWY (124 aa)). Positions 1607–1618 (SKRKTKISRKTR) match the Nuclear localization signal motif.

Belongs to the PI3/PI4-kinase family. In terms of assembly, part of a complex with ERBB2 and EGFR. Interacts with clathrin trimers. Interacts with SBF2/MTMR13. Requires Ca(2+) as cofactor. Mg(2+) serves as cofactor. Phosphorylated on Ser-259 during mitosis and upon UV irradiation; which does not change enzymatic activity but leads to proteasomal degradation. Phosphorylated upon insulin stimulation; which may lead to enzyme activation.

The protein localises to the cell membrane. It is found in the cytoplasmic vesicle. The protein resides in the clathrin-coated vesicle. Its subcellular location is the nucleus. It localises to the cytoplasm. The protein localises to the golgi apparatus. It is found in the trans-Golgi network. It catalyses the reaction a 1,2-diacyl-sn-glycero-3-phospho-(1D-myo-inositol 4-phosphate) + ATP = a 1,2-diacyl-sn-glycero-3-phospho-(1D-myo-inositol-3,4-bisphosphate) + ADP + H(+). The catalysed reaction is a 1,2-diacyl-sn-glycero-3-phospho-(1D-myo-inositol) + ATP = a 1,2-diacyl-sn-glycero-3-phospho-(1D-myo-inositol-3-phosphate) + ADP + H(+). The enzyme catalyses a 1,2-diacyl-sn-glycero-3-phospho-(1D-myo-inositol-4,5-bisphosphate) + ATP = a 1,2-diacyl-sn-glycero-3-phospho-(1D-myo-inositol-3,4,5-trisphosphate) + ADP + H(+). With respect to regulation, only slightly inhibited by wortmannin and LY294002. Activated by clathrin and insulin. Functionally, generates phosphatidylinositol 3-phosphate (PtdIns3P) and phosphatidylinositol 3,4-bisphosphate (PtdIns(3,4)P2) that act as second messengers. Has a role in several intracellular trafficking events. Functions in insulin signaling and secretion. Required for translocation of the glucose transporter SLC2A4/GLUT4 to the plasma membrane and glucose uptake in response to insulin-mediated RHOQ activation. Regulates insulin secretion through two different mechanisms: involved in glucose-induced insulin secretion downstream of insulin receptor in a pathway that involves AKT1 activation and TBC1D4/AS160 phosphorylation, and participates in the late step of insulin granule exocytosis probably in insulin granule fusion. Synthesizes PtdIns3P in response to insulin signaling. Functions in clathrin-coated endocytic vesicle formation and distribution. Regulates dynamin-independent endocytosis, probably by recruiting EEA1 to internalizing vesicles. In neurosecretory cells synthesizes PtdIns3P on large dense core vesicles. Participates in calcium induced contraction of vascular smooth muscle by regulating myosin light chain (MLC) phosphorylation through a mechanism involving Rho kinase-dependent phosphorylation of the MLCP-regulatory subunit MYPT1. May play a role in the EGF signaling cascade. May be involved in mitosis and UV-induced damage response. Required for maintenance of normal renal structure and function by supporting normal podocyte function. Involved in the regulation of ciliogenesis and trafficking of ciliary components. In Pongo abelii (Sumatran orangutan), this protein is Phosphatidylinositol 4-phosphate 3-kinase C2 domain-containing subunit alpha (PIK3C2A).